We begin with the raw amino-acid sequence, 344 residues long: uncharacterized protein (344 aa).

The signal sequence occupies residues 1 to 27; that stretch reads MKKWLIIAVSLAIAIVLFMYTKGEAKA. In terms of domain architecture, GH18 spans 29–344; that stretch reads GMTVGYTTGD…FWKAIRKGTK (316 aa). Residue Glu-140 is the Proton donor of the active site.

It belongs to the glycosyl hydrolase 18 family.

This is an uncharacterized protein from Bacillus subtilis (strain 168).